Reading from the N-terminus, the 1249-residue chain is AMB antimetabolite synthetase AmbB (1249 aa).

The tract at residues 245 to 633 (FEAQARRTPQ…LGRLDDQVKF (389 aa)) is adenylation. The tract at residues 716–735 (IDRKALPRPQATGAEPQALP) is disordered. The Carrier domain occupies 734–809 (LPSDPLEQAL…ALLELLRQAA (76 aa)). Ser-768 carries the O-(pantetheine 4'-phosphoryl)serine modification. The segment at 823–1150 (GLSLAERRLW…CVTQALRQRG (328 aa)) is condensation.

This sequence belongs to the NRP synthetase family. Pantetheine 4'-phosphate is required as a cofactor.

It carries out the reaction holo-[peptidyl-carrier protein] + L-alanine + ATP = L-alanyl-[peptidyl-carrier protein] + AMP + diphosphate. Functionally, involved in the biosynthesis of the antimetabolite L-2-amino-4-methoxy-trans-3-butenoic acid (AMB), a non-proteinogenic amino acid which is toxic for prokaryotes and eukaryotes. Adenylates L-alanine and loads it onto its peptidyl carrier domain via a thioester linkage to the phosphopanthetheine moiety. In addition, loads activated L-Ala in trans onto the second carrier domain of AmbE. Can also activate L-Ser, Gly and D-Ala, albeit to a lower extent. The condensation domain of AmbB probably condenses the activated L-Ala and the L-Glu loaded on AmbE to form a L-Glu-L-Ala dipeptide at the first carrier domain of AmbE. This is AMB antimetabolite synthetase AmbB from Pseudomonas aeruginosa (strain ATCC 15692 / DSM 22644 / CIP 104116 / JCM 14847 / LMG 12228 / 1C / PRS 101 / PAO1).